The sequence spans 210 residues: CASP-like protein 3A1 (210 aa).

Residues 1–44 lie on the Cytoplasmic side of the membrane; that stretch reads MNGLKTPPEIGIQLPEAKVAAETGTMSGPLVPPRSDRSVRRGTD. Residues 45-65 form a helical membrane-spanning segment; it reads VAHVVLRFVCLLTSVIALSLM. The Extracellular portion of the chain corresponds to 66-94; that stretch reads ATAKEAASISIYGFLLPVSSKWSFSDSFE. The helical transmembrane segment at 95 to 115 threads the bilayer; the sequence is YLVGVSAAVAAHALLQLIISV. The Cytoplasmic segment spans residues 116–130; it reads SRLLRKSPVIPSRNH. A helical transmembrane segment spans residues 131–151; sequence AWLIFAGDQAFAYAMLSAGSA. The Extracellular segment spans residues 152–185; it reads ASGVTNLNRTGIRHSPLPNFCKPLRSFCDHVAAS. An N-linked (GlcNAc...) asparagine glycan is attached at Asn159. A helical membrane pass occupies residues 186 to 206; sequence IAFTFFSCFLLATSAILDVIW. Over 207–210 the chain is Cytoplasmic; sequence LSKY.

Belongs to the Casparian strip membrane proteins (CASP) family. As to quaternary structure, homodimer and heterodimers.

It localises to the cell membrane. The chain is CASP-like protein 3A1 from Vitis vinifera (Grape).